The following is a 339-amino-acid chain: Phenylalanine--tRNA ligase alpha subunit (339 aa).

Residue E254 participates in Mg(2+) binding.

Belongs to the class-II aminoacyl-tRNA synthetase family. Phe-tRNA synthetase alpha subunit type 1 subfamily. Tetramer of two alpha and two beta subunits. It depends on Mg(2+) as a cofactor.

The protein resides in the cytoplasm. It carries out the reaction tRNA(Phe) + L-phenylalanine + ATP = L-phenylalanyl-tRNA(Phe) + AMP + diphosphate + H(+). The sequence is that of Phenylalanine--tRNA ligase alpha subunit from Clostridium perfringens (strain SM101 / Type A).